The following is a 486-amino-acid chain: Glycogen synthase (486 aa).

Lysine 15 is a binding site for ADP-alpha-D-glucose.

This sequence belongs to the glycosyltransferase 1 family. Bacterial/plant glycogen synthase subfamily.

It catalyses the reaction [(1-&gt;4)-alpha-D-glucosyl](n) + ADP-alpha-D-glucose = [(1-&gt;4)-alpha-D-glucosyl](n+1) + ADP + H(+). The protein operates within glycan biosynthesis; glycogen biosynthesis. In terms of biological role, synthesizes alpha-1,4-glucan chains using ADP-glucose. The sequence is that of Glycogen synthase from Thermotoga maritima (strain ATCC 43589 / DSM 3109 / JCM 10099 / NBRC 100826 / MSB8).